Reading from the N-terminus, the 841-residue chain is Outer membrane usher protein MyfC (841 aa).

The first 26 residues, 1-26 (MFFSLKNSVAKLIAFWAICLVLPVWA), serve as a signal peptide directing secretion. C817 and C840 form a disulfide bridge.

This sequence belongs to the fimbrial export usher family.

It localises to the cell outer membrane. Its function is as follows. Involved in the export and assembly of the MyfA fimbrial subunit. The protein is Outer membrane usher protein MyfC (myfC) of Yersinia enterocolitica.